Consider the following 156-residue polypeptide: ADP-ribosylation factor-like protein 2-binding protein (156 aa).

The protein belongs to the ARL2BP family.

The protein localises to the cytoplasm. It localises to the mitochondrion intermembrane space. The protein resides in the cytoskeleton. Its subcellular location is the microtubule organizing center. It is found in the centrosome. The protein localises to the nucleus. It localises to the spindle. The protein resides in the cilium basal body. In terms of biological role, plays a role as an effector of the ADP-ribosylation factor-like protein 2, ARL2. The sequence is that of ADP-ribosylation factor-like protein 2-binding protein (arl2bp) from Xenopus laevis (African clawed frog).